The sequence spans 425 residues: Secernin-2 (425 aa).

Cys-12 is an active-site residue. Thr-52 is modified (phosphothreonine).

It belongs to the peptidase C69 family. Secernin subfamily.

The polypeptide is Secernin-2 (SCRN2) (Homo sapiens (Human)).